The chain runs to 114 residues: Small ribosomal subunit protein bS6 (114 aa).

It belongs to the bacterial ribosomal protein bS6 family.

Its function is as follows. Binds together with bS18 to 16S ribosomal RNA. This is Small ribosomal subunit protein bS6 from Bacteroides thetaiotaomicron (strain ATCC 29148 / DSM 2079 / JCM 5827 / CCUG 10774 / NCTC 10582 / VPI-5482 / E50).